A 172-amino-acid chain; its full sequence is Large ribosomal subunit protein uL10 (172 aa).

It belongs to the universal ribosomal protein uL10 family. Part of the ribosomal stalk of the 50S ribosomal subunit. The N-terminus interacts with L11 and the large rRNA to form the base of the stalk. The C-terminus forms an elongated spine to which L12 dimers bind in a sequential fashion forming a multimeric L10(L12)X complex.

Functionally, forms part of the ribosomal stalk, playing a central role in the interaction of the ribosome with GTP-bound translation factors. The protein is Large ribosomal subunit protein uL10 (rplJ) of Liberibacter africanus (Citrus greening disease).